Consider the following 364-residue polypeptide: Putative methylthioribose-1-phosphate isomerase (364 aa).

Residues 57–59 (RGA), R100, and Q206 contribute to the substrate site. The active-site Proton donor is the D247. Substrate is bound at residue 257–258 (NK).

The protein belongs to the eIF-2B alpha/beta/delta subunits family. MtnA subfamily.

It catalyses the reaction 5-(methylsulfanyl)-alpha-D-ribose 1-phosphate = 5-(methylsulfanyl)-D-ribulose 1-phosphate. Its function is as follows. Catalyzes the interconversion of methylthioribose-1-phosphate (MTR-1-P) into methylthioribulose-1-phosphate (MTRu-1-P). This is Putative methylthioribose-1-phosphate isomerase from Pyrococcus horikoshii (strain ATCC 700860 / DSM 12428 / JCM 9974 / NBRC 100139 / OT-3).